The chain runs to 2260 residues: Protein Ycf2 (2260 aa).

1614-1621 (GSIGTGRS) contacts ATP.

Belongs to the Ycf2 family.

It is found in the plastid. The protein localises to the chloroplast stroma. Probable ATPase of unknown function. Its presence in a non-photosynthetic plant (Epifagus virginiana) and experiments in tobacco indicate that it has an essential function which is probably not related to photosynthesis. The sequence is that of Protein Ycf2 from Dioscorea elephantipes (Elephant's foot yam).